The chain runs to 134 residues: Small ribosomal subunit protein uS8 (134 aa).

Belongs to the universal ribosomal protein uS8 family. In terms of assembly, part of the 30S ribosomal subunit. Contacts proteins S5 and S12.

Functionally, one of the primary rRNA binding proteins, it binds directly to 16S rRNA central domain where it helps coordinate assembly of the platform of the 30S subunit. The sequence is that of Small ribosomal subunit protein uS8 from Fervidobacterium nodosum (strain ATCC 35602 / DSM 5306 / Rt17-B1).